Here is a 125-residue protein sequence, read N- to C-terminus: Large ribosomal subunit protein bL12 (125 aa).

It belongs to the bacterial ribosomal protein bL12 family. As to quaternary structure, homodimer. Part of the ribosomal stalk of the 50S ribosomal subunit. Forms a multimeric L10(L12)X complex, where L10 forms an elongated spine to which 2 to 4 L12 dimers bind in a sequential fashion. Binds GTP-bound translation factors.

Forms part of the ribosomal stalk which helps the ribosome interact with GTP-bound translation factors. Is thus essential for accurate translation. The protein is Large ribosomal subunit protein bL12 of Methylorubrum extorquens (strain CM4 / NCIMB 13688) (Methylobacterium extorquens).